A 263-amino-acid polypeptide reads, in one-letter code: MEESGYESVLCVKPDVHVYRIPPRATNRGYRAAEWQLDQPSWSGRLRITAKGQMAYIKLEDRTSGELFAQAPVDQFPGTAVESVTDSSRYFVIRIEDGNGRRAFIGIGFGDRGDAFDFNVALQDHFKWVKQQCEFAKQAQNPDQGPKLDLGFKEGQTIKLNIANMKKKEGAAGNPRVRPASTGGLSLLPPPPGGKTSTLIPPPGEQLAVGGSLVQPAVAPSSGGAPVPWPQPNPATADIWGDFTKSTGSTSSQTQPGTGWVQF.

2 disordered regions span residues 166–194 (KKKEGAAGNPRVRPASTGGLSLLPPPPGG) and 219–263 (APSS…WVQF). S181 carries the post-translational modification Phosphoserine. 2 short sequence motifs (WXXF motif) span residues 240–243 (WGDF) and 260–263 (WVQF). Residues 246–263 (STGSTSSQTQPGTGWVQF) are compositionally biased toward low complexity.

It belongs to the NECAP family. In terms of assembly, interacts with AP1G1 and AP2A1 components of the adapter protein complexes AP-1 and AP-2. Interacts with the GAE domain proteins GGA1, GGA2 and GGA3.

The protein localises to the cytoplasmic vesicle. The protein resides in the clathrin-coated vesicle membrane. Its subcellular location is the cell membrane. In terms of biological role, involved in endocytosis. The chain is Adaptin ear-binding coat-associated protein 2 (NECAP2) from Homo sapiens (Human).